Reading from the N-terminus, the 283-residue chain is F-box only protein 27 (283 aa).

A disordered region spans residues 1–23; that stretch reads MGASVSRGRAARVPAPEPEPEEA. Residues 23-70 form the F-box domain; the sequence is ALDLSQLPPELLLVVLSHVPPRTLLGRCRQVCRGWRALVDGQALWLLI. The 177-residue stretch at 104–280 folds into the FBA domain; that stretch reads FCARRPIGRN…VTNSSVIVRV (177 aa).

In terms of assembly, part of a SCF (SKP1-cullin-F-box) protein ligase complex. Interacts with SKP1 and CUL1. As to expression, predominantly expressed in brain, heart and kidney. Expressed at lower levels in liver and lung.

Its function is as follows. Substrate-recognition component of the SCF (SKP1-CUL1-F-box protein)-type E3 ubiquitin ligase complex. Able to recognize and bind denatured glycoproteins, which are modified with complex-type oligosaccharides. In Homo sapiens (Human), this protein is F-box only protein 27 (FBXO27).